The sequence spans 182 residues: Large ribosomal subunit protein uL10 (182 aa).

It belongs to the universal ribosomal protein uL10 family. As to quaternary structure, part of the ribosomal stalk of the 50S ribosomal subunit. The N-terminus interacts with L11 and the large rRNA to form the base of the stalk. The C-terminus forms an elongated spine to which L12 dimers bind in a sequential fashion forming a multimeric L10(L12)X complex.

In terms of biological role, forms part of the ribosomal stalk, playing a central role in the interaction of the ribosome with GTP-bound translation factors. The sequence is that of Large ribosomal subunit protein uL10 from Koribacter versatilis (strain Ellin345).